Here is a 289-residue protein sequence, read N- to C-terminus: Ribosomal RNA small subunit methyltransferase A (289 aa).

Residues Asn21, Leu23, Gly48, Glu69, Asp94, and Asn120 each coordinate S-adenosyl-L-methionine.

The protein belongs to the class I-like SAM-binding methyltransferase superfamily. rRNA adenine N(6)-methyltransferase family. RsmA subfamily.

Its subcellular location is the cytoplasm. The catalysed reaction is adenosine(1518)/adenosine(1519) in 16S rRNA + 4 S-adenosyl-L-methionine = N(6)-dimethyladenosine(1518)/N(6)-dimethyladenosine(1519) in 16S rRNA + 4 S-adenosyl-L-homocysteine + 4 H(+). Functionally, specifically dimethylates two adjacent adenosines (A1518 and A1519) in the loop of a conserved hairpin near the 3'-end of 16S rRNA in the 30S particle. May play a critical role in biogenesis of 30S subunits. The protein is Ribosomal RNA small subunit methyltransferase A of Haemophilus ducreyi (strain 35000HP / ATCC 700724).